A 385-amino-acid chain; its full sequence is 3-hydroxyisobutyryl-CoA hydrolase, mitochondrial (385 aa).

The N-terminal 32 residues, 1–32, are a transit peptide targeting the mitochondrion; that stretch reads MGQPYAWRLLSRVSSFRRASVILQHLRMSMHT. Residues Lys-54, Lys-91, and Lys-100 each carry the N6-acetyllysine; alternate modification. An N6-succinyllysine; alternate mark is found at Lys-54, Lys-91, and Lys-100. Substrate-binding residues include Glu-120, Gly-145, Glu-168, and Asp-176. The residue at position 220 (Lys-220) is an N6-acetyllysine; alternate. Lys-220 is subject to N6-succinyllysine; alternate. Residue Ser-233 is modified to Phosphoserine. Residues Lys-249 and Lys-256 each carry the N6-succinyllysine modification. Lys-296 carries the post-translational modification N6-acetyllysine; alternate. Lys-296 carries the post-translational modification N6-succinyllysine; alternate. N6-succinyllysine is present on Lys-300. Lys-352 is subject to N6-acetyllysine; alternate. N6-succinyllysine; alternate is present on Lys-352. Residues Lys-359 and Lys-364 each carry the N6-acetyllysine modification. Lys-376 carries the N6-succinyllysine modification.

The protein belongs to the enoyl-CoA hydratase/isomerase family.

It is found in the mitochondrion. It catalyses the reaction 3-hydroxy-2-methylpropanoyl-CoA + H2O = 3-hydroxy-2-methylpropanoate + CoA + H(+). The protein operates within amino-acid degradation; L-valine degradation. Its function is as follows. Hydrolyzes 3-hydroxyisobutyryl-CoA (HIBYL-CoA), a saline catabolite. Has high activity toward isobutyryl-CoA. Could be an isobutyryl-CoA dehydrogenase that functions in valine catabolism. Also hydrolyzes 3-hydroxypropanoyl-CoA. The polypeptide is 3-hydroxyisobutyryl-CoA hydrolase, mitochondrial (Hibch) (Mus musculus (Mouse)).